Here is an 81-residue protein sequence, read N- to C-terminus: Photosystem I iron-sulfur center (81 aa).

2 4Fe-4S ferredoxin-type domains span residues 2–31 and 39–68; these read AHSVKIYDTCIGCTQCVRACPTDVLEMVPW and IASAPRTEDCVGCKRCESACPTDYLSVRVY. Residues Cys-11, Cys-14, Cys-17, Cys-21, Cys-48, Cys-51, Cys-54, and Cys-58 each coordinate [4Fe-4S] cluster.

The eukaryotic PSI reaction center is composed of at least 11 subunits. The cofactor is [4Fe-4S] cluster.

It is found in the plastid. Its subcellular location is the chloroplast thylakoid membrane. The catalysed reaction is reduced [plastocyanin] + hnu + oxidized [2Fe-2S]-[ferredoxin] = oxidized [plastocyanin] + reduced [2Fe-2S]-[ferredoxin]. In terms of biological role, apoprotein for the two 4Fe-4S centers FA and FB of photosystem I (PSI); essential for photochemical activity. FB is the terminal electron acceptor of PSI, donating electrons to ferredoxin. The C-terminus interacts with PsaA/B/D and helps assemble the protein into the PSI complex. Required for binding of PsaD and PsaE to PSI. PSI is a plastocyanin-ferredoxin oxidoreductase, converting photonic excitation into a charge separation, which transfers an electron from the donor P700 chlorophyll pair to the spectroscopically characterized acceptors A0, A1, FX, FA and FB in turn. The chain is Photosystem I iron-sulfur center from Gnetum parvifolium (Small-leaved jointfir).